The chain runs to 718 residues: 1-deoxy-D-xylulose-5-phosphate synthase 1, chloroplastic (718 aa).

A chloroplast-targeting transit peptide spans 1 to 55 (MAFCALSFPAHISRATTPAPSDLQKSSSFSSRFYWGADLLRPSQYKVRKIQSGVY). Thiamine diphosphate-binding positions include H143 and 184 to 186 (GHS). D215 is a Mg(2+) binding site. Thiamine diphosphate is bound by residues 216–217 (GA), N244, Y365, and E447. Residue N244 coordinates Mg(2+).

Belongs to the transketolase family. DXPS subfamily. As to quaternary structure, homodimer. Requires Mg(2+) as cofactor. Thiamine diphosphate is required as a cofactor. As to expression, expressed in trichomes, leaves, flowers, roots and stems.

It localises to the plastid. The protein localises to the chloroplast. The catalysed reaction is D-glyceraldehyde 3-phosphate + pyruvate + H(+) = 1-deoxy-D-xylulose 5-phosphate + CO2. Its pathway is metabolic intermediate biosynthesis; 1-deoxy-D-xylulose 5-phosphate biosynthesis; 1-deoxy-D-xylulose 5-phosphate from D-glyceraldehyde 3-phosphate and pyruvate: step 1/1. Catalyzes the acyloin condensation reaction between C atoms 2 and 3 of pyruvate and glyceraldehyde 3-phosphate to yield 1-deoxy-D-xylulose-5-phosphate (DXP). The sequence is that of 1-deoxy-D-xylulose-5-phosphate synthase 1, chloroplastic from Cannabis sativa (Hemp).